The sequence spans 233 residues: MEIKYFLVLLVGFLLVLPSIVNPYRKGVTITNQQPKINIYQLDVNNPHNPNNNPHNPHNPNNNPHHPHHLHHHHHHHHHHHHHHHHHHHHHHHHHHPHHPHHHPHHHHHPHHHHHHHHHHHHHHHHHHHHHHHHHHHHHHHHHHHHHHHHHHHHPHHHPHPHPHPHPHPHLHPNPHPHPHPHPHPHPHPHHHPNPNPHPHPHPHPHHHHHHQEASECLSYQGNRNRLFIKRDY.

The N-terminal stretch at 1–23 (MEIKYFLVLLVGFLLVLPSIVNP) is a signal peptide. A disordered region spans residues 42 to 217 (LDVNNPHNPN…HHHHQEASEC (176 aa)). A compositionally biased stretch (low complexity) spans 45 to 64 (NNPHNPNNNPHNPHNPNNNP). A compositionally biased stretch (basic residues) spans 65 to 211 (HHPHHLHHHH…HPHPHHHHHH (147 aa)).

The protein localises to the secreted. This is an uncharacterized protein from Dictyostelium discoideum (Social amoeba).